The following is a 576-amino-acid chain: Calcium-dependent protein kinase 11 (576 aa).

A lipid anchor (N-myristoyl glycine) is attached at glycine 2. The segment at 27–88 (PADAAPPALP…ANKAAPKVKR (62 aa)) is disordered. Over residues 41-56 (APSDQAPEPVTIPPSE) the composition is skewed to low complexity. A Protein kinase domain is found at 113 to 371 (YTIGKKLGQG…AHEALCHPWV (259 aa)). Residues 119–127 (LGQGQFGTT) and lysine 142 contribute to the ATP site. Aspartate 237 acts as the Proton acceptor in catalysis. The autoinhibitory domain stretch occupies residues 377–407 (APDKPLDSAVLSRLKQFSAMNKLKKMALRVI). EF-hand domains follow at residues 414–449 (EEIA…VGAN), 450–485 (LMDS…INKV), 486–521 (EKED…FGIG), and 522–555 (DTRI…GNNA). Residues aspartate 427, aspartate 429, serine 431, histidine 433, glutamate 438, aspartate 463, aspartate 465, serine 467, threonine 469, glutamate 474, aspartate 499, aspartate 501, serine 503, tyrosine 505, glutamate 510, aspartate 533, aspartate 535, aspartate 537, arginine 539, and glutamate 544 each coordinate Ca(2+).

This sequence belongs to the protein kinase superfamily. Ser/Thr protein kinase family. CDPK subfamily.

It localises to the membrane. The catalysed reaction is L-seryl-[protein] + ATP = O-phospho-L-seryl-[protein] + ADP + H(+). It catalyses the reaction L-threonyl-[protein] + ATP = O-phospho-L-threonyl-[protein] + ADP + H(+). With respect to regulation, activated by calcium. Autophosphorylation may play an important role in the regulation of the kinase activity. May play a role in signal transduction pathways that involve calcium as a second messenger. The sequence is that of Calcium-dependent protein kinase 11 from Oryza sativa subsp. japonica (Rice).